The sequence spans 147 residues: Hemoglobin larval subunit beta-1 (147 aa).

The region spanning histidine 3–phenylalanine 147 is the Globin domain. 2 residues coordinate heme b: histidine 64 and histidine 93.

It belongs to the globin family. In terms of assembly, heterotetramer of two alpha chains and two beta chains. As to expression, red blood cells.

This is a larval (tadpole) beta-globin. The protein is Hemoglobin larval subunit beta-1 of Xenopus laevis (African clawed frog).